The chain runs to 352 residues: Mas-related G-protein coupled receptor member X2 (352 aa).

Topologically, residues 1–45 (MEERNISGRDLRVDSNITYWGTNITAVNESNHTGMSFCEVVSCTM) are extracellular. 5 N-linked (GlcNAc...) asparagine glycosylation sites follow: asparagine 5, asparagine 16, asparagine 23, asparagine 28, and asparagine 31. A helical membrane pass occupies residues 46-66 (VFLSLIVALVGLVGNATVLWF). Over 67–75 (LGFQMRRNA) the chain is Cytoplasmic. The helical transmembrane segment at 76–96 (FSVYILNLAGADFLFICFQIG) threads the bilayer. Over 97–107 (YCFHMILDIDS) the chain is Extracellular. Residues 108–128 (IPIEIDLFYLVVLNFPYFCGL) form a helical membrane-spanning segment. The Cytoplasmic portion of the chain corresponds to 129-155 (SILSAISIERCLSVMWPIWYHCQRPRH). Residues 156 to 176 (TSAVICTLLWVLSLVCSLLEG) form a helical membrane-spanning segment. The Extracellular segment spans residues 177 to 195 (KECGFLYYTSDPGWCKTFD). The chain crosses the membrane as a helical span at residues 196–216 (LITATWLIVLFVALLGSSLAL). Over 217 to 239 (VITIFWGLHKIPVTRLYVAIVFT) the chain is Cytoplasmic. A helical membrane pass occupies residues 240 to 260 (VLVFLLFGLPYGIYWFLLVWI). The Extracellular segment spans residues 261–275 (EKFYYVLPCSIYPVT). The chain crosses the membrane as a helical span at residues 276–296 (VFLSCVNSSAKPIIYCLVGSI). The Cytoplasmic segment spans residues 297 to 347 (RHHRFQRKTLKLFLQRAMQDTPEEEECGEMGSSGRSREIKTIWKGLRAALI).

This sequence belongs to the G-protein coupled receptor 1 family. Mas subfamily.

It is found in the cell membrane. Its function is as follows. Orphan receptor. Probably involved in the function of nociceptive neurons. May regulate nociceptor function and/or development, including the sensation or modulation of pain. The sequence is that of Mas-related G-protein coupled receptor member X2 (Mrgprx2) from Mus musculus (Mouse).